Consider the following 39-residue polypeptide: Contryphan-Cal3 (39 aa).

The N-terminal stretch at M1–S20 is a signal peptide. C29 and C35 are joined by a disulfide.

Expressed by the venom duct.

Its subcellular location is the secreted. Probable neurotoxin. The chain is Contryphan-Cal3 from Californiconus californicus (California cone).